The following is a 200-amino-acid chain: Snake venom metalloproteinase BmooMP-I (200 aa).

The Peptidase M12B domain occupies 5-200 (RYIELAVVAD…HNPQCILNEP (196 aa)). Ca(2+) contacts are provided by Glu-8 and Asp-92. Cystine bridges form between Cys-116/Cys-195, Cys-155/Cys-179, and Cys-157/Cys-162. His-141 lines the Zn(2+) pocket. The active site involves Glu-142. Zn(2+) contacts are provided by His-145 and His-151. The Ca(2+) site is built by Cys-195 and Asn-198.

It belongs to the venom metalloproteinase (M12B) family. P-I subfamily. In terms of assembly, monomer. Requires Zn(2+) as cofactor. As to expression, expressed by the venom gland.

It is found in the secreted. In terms of biological role, zinc metalloprotease that displays fibrinogenolytic, gelatinase and weak hemorrhagic activities. Degrades the three chain of fibrinogen Aalpha-chain (FGA), Bbeta-chain (FGB), and gamma (FGG). The sequence is that of Snake venom metalloproteinase BmooMP-I from Bothrops moojeni (Lance-headed viper).